A 166-amino-acid polypeptide reads, in one-letter code: Large ribosomal subunit protein uL10 (166 aa).

Belongs to the universal ribosomal protein uL10 family. In terms of assembly, part of the ribosomal stalk of the 50S ribosomal subunit. The N-terminus interacts with L11 and the large rRNA to form the base of the stalk. The C-terminus forms an elongated spine to which L12 dimers bind in a sequential fashion forming a multimeric L10(L12)X complex.

Forms part of the ribosomal stalk, playing a central role in the interaction of the ribosome with GTP-bound translation factors. The sequence is that of Large ribosomal subunit protein uL10 from Staphylococcus aureus (strain JH1).